The sequence spans 40 residues: Large ribosomal subunit protein bL36B (40 aa).

This sequence belongs to the bacterial ribosomal protein bL36 family.

The sequence is that of Large ribosomal subunit protein bL36B from Clavibacter michiganensis subsp. michiganensis (strain NCPPB 382).